The following is a 137-amino-acid chain: Large ribosomal subunit protein uL14 (137 aa).

It belongs to the universal ribosomal protein uL14 family. Part of the 50S ribosomal subunit. Forms a cluster with proteins L3 and L24e, part of which may contact the 16S rRNA in 2 intersubunit bridges.

Binds to 23S rRNA. Forms part of two intersubunit bridges in the 70S ribosome. The chain is Large ribosomal subunit protein uL14 from Ignicoccus hospitalis (strain KIN4/I / DSM 18386 / JCM 14125).